A 453-amino-acid polypeptide reads, in one-letter code: Glutamyl-tRNA(Gln) amidotransferase subunit A (453 aa).

Residues K55 and S130 each act as charge relay system in the active site. The active-site Acyl-ester intermediate is S154.

Belongs to the amidase family. GatA subfamily. Heterotrimer of A, B and C subunits.

It catalyses the reaction L-glutamyl-tRNA(Gln) + L-glutamine + ATP + H2O = L-glutaminyl-tRNA(Gln) + L-glutamate + ADP + phosphate + H(+). Functionally, allows the formation of correctly charged Gln-tRNA(Gln) through the transamidation of misacylated Glu-tRNA(Gln) in organisms which lack glutaminyl-tRNA synthetase. The reaction takes place in the presence of glutamine and ATP through an activated gamma-phospho-Glu-tRNA(Gln). In Aliarcobacter butzleri (strain RM4018) (Arcobacter butzleri), this protein is Glutamyl-tRNA(Gln) amidotransferase subunit A.